A 68-amino-acid polypeptide reads, in one-letter code: DNA gyrase inhibitor YacG (68 aa).

Zn(2+) is bound by residues Cys-14, Cys-17, Cys-29, and Cys-33.

The protein belongs to the DNA gyrase inhibitor YacG family. As to quaternary structure, interacts with GyrB. Zn(2+) serves as cofactor.

Inhibits all the catalytic activities of DNA gyrase by preventing its interaction with DNA. Acts by binding directly to the C-terminal domain of GyrB, which probably disrupts DNA binding by the gyrase. In Azorhizobium caulinodans (strain ATCC 43989 / DSM 5975 / JCM 20966 / LMG 6465 / NBRC 14845 / NCIMB 13405 / ORS 571), this protein is DNA gyrase inhibitor YacG.